A 610-amino-acid chain; its full sequence is MSDQFDAKAFLKTVTSQPGVYRMYDAGGTVIYVGKAKDLKKRLSSYFRSNLASRKTEALVAQIQQIDVTVTHTETEALLLEHNYIKLYQPRYNVLLRDDKSYPFIFLSGDTHPRLAMHRGAKHAKGEYFGPFPNGYAVRETLALLQKIFPIRQCENSVYRNRSRPCLQYQIGRCLGPCVAGLVSEEEYAQQVEYVRLFLSGKDDQVLTQLIARMEKASQNLEFEEAARIRDQIQAVRRVTEKQFVSNTGDDLDVIGVAFDAGMACVHVLFIRQGKVLGSRSYFPKVPGGTELGEVVETFVGQFYLQGSQMRTLPGEILLDFNLSDKTLLADSLTELAGRRINVQTKPRGDRARYLKLARTNAATALTSKLSQQSTVHQRLSALATVLKLPEVKRMECFDISHTMGEQTVASCVVFDANGPLRSEYRRYNITGITPGDDYAAMNQVLRRRYGKAIEESKIPDVILIDGGKGQLAQAKAVFAELDVPWDKNRPLLLGVAKGADRKAGLETLFFEPEGEGFSLPSDSPALHVIQHIRDESHDHAIGGHRKKRAKVKNTSTLETIEGVGPKRRQMLLKYMGGLQGLRNASVEEIAKVPGISQGLAEKIFWSLKH.

Residues 16–94 (SQPGVYRMYD…IKLYQPRYNV (79 aa)) enclose the GIY-YIG domain. Positions 204–239 (DQVLTQLIARMEKASQNLEFEEAARIRDQIQAVRRV) constitute a UVR domain.

It belongs to the UvrC family. As to quaternary structure, interacts with UvrB in an incision complex.

It localises to the cytoplasm. In terms of biological role, the UvrABC repair system catalyzes the recognition and processing of DNA lesions. UvrC both incises the 5' and 3' sides of the lesion. The N-terminal half is responsible for the 3' incision and the C-terminal half is responsible for the 5' incision. The sequence is that of UvrABC system protein C from Escherichia fergusonii (strain ATCC 35469 / DSM 13698 / CCUG 18766 / IAM 14443 / JCM 21226 / LMG 7866 / NBRC 102419 / NCTC 12128 / CDC 0568-73).